We begin with the raw amino-acid sequence, 613 residues long: 8-methylmenaquinol:fumarate reductase flavoprotein subunit (613 aa).

Positions 1 to 33 form a signal peptide, tat-type signal; it reads MSEQFTRREFLQSACITMGALAVSTSGVDRAFA. FAD is bound by residues 53–58, 78–93, and aspartate 255; these read GSGAAG and SKVM…AEGG. Substrate-binding residues include histidine 276 and threonine 288. Arginine 319 (proton acceptor) is an active-site residue. Histidine 387 serves as a coordination point for substrate. Residue glutamate 413 coordinates FAD. Arginine 424 contributes to the substrate binding site. 429 to 430 provides a ligand contact to FAD; the sequence is SL.

It belongs to the FAD-dependent oxidoreductase 2 family. FRD/SDH subfamily. The MFR complex is composed of three subunits: a flavoprotein (SdhA), an iron-sulfur protein (SdhB), and one hydrophobic anchor protein (SdhE). The cofactor is FAD. Predicted to be exported by the Tat system. The position of the signal peptide cleavage has not been experimentally proven.

The protein localises to the periplasm. It localises to the cell membrane. The catalysed reaction is 8-methylmenaquinone-6 + succinate = 8-methylmenaquinol-6 + fumarate. Its function is as follows. Flavoprotein subunit of 8-methylmenaquinol:fumarate reductase (MFR), that catalyzes the reduction of fumarate using 8-methylmenaquinol-6 as electron donor. The complex shows no succinate oxidation activity. Is involved in anaerobic metabolism. SdhA contains the dicarboxylate reduction site. The sequence is that of 8-methylmenaquinol:fumarate reductase flavoprotein subunit from Wolinella succinogenes (strain ATCC 29543 / DSM 1740 / CCUG 13145 / JCM 31913 / LMG 7466 / NCTC 11488 / FDC 602W) (Vibrio succinogenes).